The chain runs to 197 residues: Mediator of RNA polymerase II transcription subunit 10 (197 aa).

Residues 1 to 39 (MSSTAGTRRPRQITPTSPSPSPEPQPGATNGSSSTINVA) form a disordered region. Polar residues predominate over residues 27–37 (GATNGSSSTIN).

It belongs to the Mediator complex subunit 10 family. In terms of assembly, component of the Mediator complex.

It is found in the nucleus. Component of the Mediator complex, a coactivator involved in the regulated transcription of nearly all RNA polymerase II-dependent genes. Mediator functions as a bridge to convey information from gene-specific regulatory proteins to the basal RNA polymerase II transcription machinery. Mediator is recruited to promoters by direct interactions with regulatory proteins and serves as a scaffold for the assembly of a functional preinitiation complex with RNA polymerase II and the general transcription factors. The polypeptide is Mediator of RNA polymerase II transcription subunit 10 (NUT2) (Mycosarcoma maydis (Corn smut fungus)).